The chain runs to 696 residues: DNA ligase (696 aa).

NAD(+)-binding positions include Asp36–Asp40, Ser85–Leu86, and Glu123. The active-site N6-AMP-lysine intermediate is the Lys125. Arg146, Glu181, Lys319, and Lys343 together coordinate NAD(+). 4 residues coordinate Zn(2+): Cys437, Cys440, Cys455, and Cys461. The BRCT domain occupies Pro618–Leu696.

This sequence belongs to the NAD-dependent DNA ligase family. LigA subfamily. The cofactor is Mg(2+). Requires Mn(2+) as cofactor.

It catalyses the reaction NAD(+) + (deoxyribonucleotide)n-3'-hydroxyl + 5'-phospho-(deoxyribonucleotide)m = (deoxyribonucleotide)n+m + AMP + beta-nicotinamide D-nucleotide.. Functionally, DNA ligase that catalyzes the formation of phosphodiester linkages between 5'-phosphoryl and 3'-hydroxyl groups in double-stranded DNA using NAD as a coenzyme and as the energy source for the reaction. It is essential for DNA replication and repair of damaged DNA. This Bordetella bronchiseptica (strain ATCC BAA-588 / NCTC 13252 / RB50) (Alcaligenes bronchisepticus) protein is DNA ligase.